The following is a 167-amino-acid chain: ATP synthase subunit b (167 aa).

A helical transmembrane segment spans residues 9–29 (ALPLGNMLFIIIAFLLLMLIL).

The protein belongs to the ATPase B chain family. As to quaternary structure, F-type ATPases have 2 components, F(1) - the catalytic core - and F(0) - the membrane proton channel. F(1) has five subunits: alpha(3), beta(3), gamma(1), delta(1), epsilon(1). F(0) has three main subunits: a(1), b(2) and c(10-14). The alpha and beta chains form an alternating ring which encloses part of the gamma chain. F(1) is attached to F(0) by a central stalk formed by the gamma and epsilon chains, while a peripheral stalk is formed by the delta and b chains.

The protein resides in the cell membrane. Functionally, f(1)F(0) ATP synthase produces ATP from ADP in the presence of a proton or sodium gradient. F-type ATPases consist of two structural domains, F(1) containing the extramembraneous catalytic core and F(0) containing the membrane proton channel, linked together by a central stalk and a peripheral stalk. During catalysis, ATP synthesis in the catalytic domain of F(1) is coupled via a rotary mechanism of the central stalk subunits to proton translocation. Component of the F(0) channel, it forms part of the peripheral stalk, linking F(1) to F(0). The chain is ATP synthase subunit b from Leuconostoc mesenteroides subsp. mesenteroides (strain ATCC 8293 / DSM 20343 / BCRC 11652 / CCM 1803 / JCM 6124 / NCDO 523 / NBRC 100496 / NCIMB 8023 / NCTC 12954 / NRRL B-1118 / 37Y).